We begin with the raw amino-acid sequence, 457 residues long: L-asparaginase-like protein GA18140 (457 aa).

Positions 1–20 (MRYLCRAQLLSLLLLPLLKA) are cleaved as a signal peptide. 3 disulfides stabilise this stretch: Cys-72-Cys-78, Cys-172-Cys-188, and Cys-327-Cys-354.

The protein belongs to the Ntn-hydrolase family.

The protein is L-asparaginase-like protein GA18140 of Drosophila pseudoobscura pseudoobscura (Fruit fly).